The chain runs to 201 residues: uncharacterized protein (201 aa).

The protein belongs to the methyltransferase superfamily.

This is an uncharacterized protein from Bacillus subtilis (strain 168).